The chain runs to 279 residues: MDTELLKTFLEVSRTRHFGRAAESLYLTQSAVSFRIRQLENQLGVNLFTRHRNNIRLTAAGEKLLPYAETLMSTWQAARKEVAHTSRHNEFSIGASASLWECMLNQWLGRLYKNQDAHTGLQFEARIAQRQSLVKQLHERQLDLLITTEAPKMDEFSSQLLGYFTLALYTSAPSKLKGDLNYLRLEWGPDFQQHEAGLIGADEVPILTTSSAELAQQQIATLNGCTWLPVSWARKKGGLHTVVDSTTLSRPLYAIWLQNSDKNALIRDLLKINVLDEVY.

The HTH lysR-type domain occupies 1-58; sequence MDTELLKTFLEVSRTRHFGRAAESLYLTQSAVSFRIRQLENQLGVNLFTRHRNNIRLT. Residues 18 to 37 constitute a DNA-binding region (H-T-H motif); sequence FGRAAESLYLTQSAVSFRIR.

Belongs to the LysR transcriptional regulatory family.

Negatively regulates the transcription of the flagellar master operon flhDC by binding to the upstream region of the operon. This chain is HTH-type transcriptional regulator HdfR, found in Escherichia coli O17:K52:H18 (strain UMN026 / ExPEC).